A 115-amino-acid polypeptide reads, in one-letter code: T cell receptor beta variable 11-3 (115 aa).

Residues 1 to 21 (MGTRLLCWVAFCLLVEELIEA) form the signal peptide. One can recognise an Ig-like domain in the interval 22-115 (GVVQSPRYKI…SAVYLCASSL (94 aa)). A disulfide bridge connects residues cysteine 42 and cysteine 111.

Alpha-beta TR is a heterodimer composed of an alpha and beta chain; disulfide-linked. The alpha-beta TR is associated with the transmembrane signaling CD3 coreceptor proteins to form the TR-CD3 (TcR or TCR). The assembly of alpha-beta TR heterodimers with CD3 occurs in the endoplasmic reticulum where a single alpha-beta TR heterodimer associates with one CD3D-CD3E heterodimer, one CD3G-CD3E heterodimer and one CD247 homodimer forming a stable octameric structure. CD3D-CD3E and CD3G-CD3E heterodimers preferentially associate with TR alpha and TR beta chains, respectively. The association of the CD247 homodimer is the last step of TcR assembly in the endoplasmic reticulum and is required for transport to the cell surface.

The protein resides in the cell membrane. Its function is as follows. V region of the variable domain of T cell receptor (TR) beta chain that participates in the antigen recognition. Alpha-beta T cell receptors are antigen specific receptors which are essential to the immune response and are present on the cell surface of T lymphocytes. Recognize peptide-major histocompatibility (MH) (pMH) complexes that are displayed by antigen presenting cells (APC), a prerequisite for efficient T cell adaptive immunity against pathogens. Binding of alpha-beta TR to pMH complex initiates TR-CD3 clustering on the cell surface and intracellular activation of LCK that phosphorylates the ITAM motifs of CD3G, CD3D, CD3E and CD247 enabling the recruitment of ZAP70. In turn ZAP70 phosphorylates LAT, which recruits numerous signaling molecules to form the LAT signalosome. The LAT signalosome propagates signal branching to three major signaling pathways, the calcium, the mitogen-activated protein kinase (MAPK) kinase and the nuclear factor NF-kappa-B (NF-kB) pathways, leading to the mobilization of transcription factors that are critical for gene expression and essential for T cell growth and differentiation. The T cell repertoire is generated in the thymus, by V-(D)-J rearrangement. This repertoire is then shaped by intrathymic selection events to generate a peripheral T cell pool of self-MH restricted, non-autoaggressive T cells. Post-thymic interaction of alpha-beta TR with the pMH complexes shapes TR structural and functional avidity. The sequence is that of T cell receptor beta variable 11-3 from Homo sapiens (Human).